Here is a 1287-residue protein sequence, read N- to C-terminus: FYVE zinc finger domain protein UPA1 (1287 aa).

Residues 1–298 (MTIPDPANII…SSTSLSAPAE (298 aa)) form a disordered region. Residues 86–99 (DSSSFGSKPSSSAS) are compositionally biased toward low complexity. A compositionally biased stretch (polar residues) spans 115–136 (WATSSTTSHPSKASQSTLSPNA). The PAM2 signature appears at 128–144 (SQSTLSPNASVFKPSRS). Basic and acidic residues-rich tracts occupy residues 177–187 (RPDHAPLDHEQ) and 201–211 (KVEEQRGDHSI). Residues 212–235 (PHQNGLVSAQAQTASDAVSTSKYT) are compositionally biased toward polar residues. The short motif at 239–253 (ADQEEDQDDFVYPGA) is the PAM2L 1 element. Positions 255–294 (SPSSGQAAVQDEQQAVTDSQTTKSLTKQESDPEASSTSLS) are enriched in polar residues. ANK repeat units follow at residues 366–395 (NGLVPLHFAAKDGKTDIVRWLITQAGAIVE), 400–429 (EGETALHKAAMAGKLSVASLLLSHGADANA), 433–463 (DGWTALHNACSRGYLDLVRLLVDRGHAQIDV), and 468–497 (GAWTPLMNAASKGHLPVVRHLTAKYHADPF). 4 disordered regions span residues 582-630 (NGGK…VGLP), 643-697 (RVGP…ASAQ), 934-960 (REAAGLDEDEDEDAADDDDDEFIYPNS), and 977-1005 (TSGTLSRPSLSQRQSSAASMLRNSVAPSE). The span at 674–695 (STPTPESVLQARRGTSSVNGAS) shows a compositional bias: polar residues. Positions 938–955 (GLDEDEDEDAADDDDDEF) are enriched in acidic residues. Residues 941-960 (EDEDEDAADDDDDEFIYPNS) carry the PAM2L 2 motif. A compositionally biased stretch (low complexity) spans 981–995 (LSRPSLSQRQSSAAS). The FYVE-type zinc finger occupies 1055-1129 (DEEAKDCIGC…VCNGCHAELQ (75 aa)). Zn(2+) is bound by residues C1061, C1064, C1077, C1080, C1085, C1088, C1121, and C1124. The RING-type; atypical zinc-finger motif lies at 1243–1283 (CSICMEDFVANSTIARLPCLCYFHRGCIDSWFKRGRECPVH).

Belongs to the UPA1 PAM2 domain-binding protein family. As to quaternary structure, part of large ribonucleoprotein complexes (mRNPs) containing RNA-binding proteins RRM4 and PAB1, endosome-binding protein UPA1, core scaffold protein UPA2 and associated factor GRP1. Interacts (via PAM2 motif) with PAB1 (via PABC domain). Interacts (via PAM2L motifs) with RRM4.

It is found in the cytoplasm. The protein localises to the cytoskeleton. It localises to the endosome. FYVE zinc finger domain protein that functions in endosomal targeting and transport of mRNAs, as well as associated ribosomes. The endosomal mRNA transport regulates polarity of the infectious hyphae by transporting a broad spectrum of cargo mRNAs from the nucleus to cell poles. Involved in chitinase CTS1 secretion. Dispensable for general endosomal functions but crucial for endosomal recruitment of RRM4. This is FYVE zinc finger domain protein UPA1 from Mycosarcoma maydis (Corn smut fungus).